The following is a 384-amino-acid chain: Class V chitinase CHIT5a (384 aa).

The N-terminal stretch at 1 to 27 is a signal peptide; the sequence is MAVQKIIITPILVFLVTIFFNVSSSSS. Residues asparagine 29, asparagine 114, and asparagine 133 are each glycosylated (N-linked (GlcNAc...) asparagine). A GH18 domain is found at 39–384; it reads GVRSAYWPAG…SKQASNAWGH (346 aa). Glutamate 152 serves as the catalytic Proton donor. Residues asparagine 195 and asparagine 234 are each glycosylated (N-linked (GlcNAc...) asparagine).

Belongs to the glycosyl hydrolase 18 family. Chitinase class V subfamily.

The enzyme catalyses Random endo-hydrolysis of N-acetyl-beta-D-glucosaminide (1-&gt;4)-beta-linkages in chitin and chitodextrins.. It functions in the pathway glycan degradation; chitin degradation. Its function is as follows. Possesses chitinase activity in vitro toward glycol chitin, carboxymethyl-chitin, colloidal chitin, and the chitin oligosaccharides (N-acetylglucosamine) (GlcNAc)6 and (GlcNAc)5. Hydrolyzes (GlcNAc)6 into (GlcNAc)4 and (GlcNAc)2, or two (GlcNAc)3 molecules. Has the capacity to inhibit hyphal growth of the fungus Trichoderma viride in an agar-plate bioassay. The polypeptide is Class V chitinase CHIT5a (Medicago truncatula (Barrel medic)).